A 120-amino-acid polypeptide reads, in one-letter code: Small ribosomal subunit protein uS13 (120 aa).

Positions 92–120 (HRKGLPVRGQTTKNNARTRKGKKKTVGSK) are disordered. Positions 107 to 120 (ARTRKGKKKTVGSK) are enriched in basic residues.

The protein belongs to the universal ribosomal protein uS13 family. In terms of assembly, part of the 30S ribosomal subunit. Forms a loose heterodimer with protein S19. Forms two bridges to the 50S subunit in the 70S ribosome.

Located at the top of the head of the 30S subunit, it contacts several helices of the 16S rRNA. In the 70S ribosome it contacts the 23S rRNA (bridge B1a) and protein L5 of the 50S subunit (bridge B1b), connecting the 2 subunits; these bridges are implicated in subunit movement. Contacts the tRNAs in the A and P-sites. This Helicobacter pylori (strain J99 / ATCC 700824) (Campylobacter pylori J99) protein is Small ribosomal subunit protein uS13.